Consider the following 299-residue polypeptide: Very long chain fatty acid elongase 5 (299 aa).

Position 1 is an N-acetylmethionine (Met-1). 7 consecutive transmembrane segments (helical) span residues 26 to 46 (WFLL…LLIV), 64 to 84 (ILVV…CELV), 112 to 132 (VLWW…FFIL), 150 to 170 (MLNI…YFGA), 172 to 192 (LNSF…VLSM), 205 to 225 (GQLL…IWPC), and 226 to 246 (TFPL…IALF). Positions 262–299 (RKDHLKDHQNGSKAAVNGHTNSFSPLENNVKPRKLRKD) are disordered. Residues 279–288 (GHTNSFSPLE) are compositionally biased toward polar residues. Ser-285 bears the Phosphoserine mark.

The protein belongs to the ELO family. ELOVL5 subfamily. In terms of assembly, interacts with TECR.

The protein resides in the endoplasmic reticulum membrane. It localises to the cell projection. The protein localises to the dendrite. The enzyme catalyses a very-long-chain acyl-CoA + malonyl-CoA + H(+) = a very-long-chain 3-oxoacyl-CoA + CO2 + CoA. It carries out the reaction (6Z,9Z,12Z)-octadecatrienoyl-CoA + malonyl-CoA + H(+) = (8Z,11Z,14Z)-3-oxoeicosatrienoyl-CoA + CO2 + CoA. The catalysed reaction is (9Z,12Z,15Z)-octadecatrienoyl-CoA + malonyl-CoA + H(+) = (11Z,14Z,17Z)-3-oxoeicosatrienoyl-CoA + CO2 + CoA. It catalyses the reaction (9Z)-hexadecenoyl-CoA + malonyl-CoA + H(+) = 3-oxo-(11Z)-octadecenoyl-CoA + CO2 + CoA. The enzyme catalyses (9Z)-octadecenoyl-CoA + malonyl-CoA + H(+) = 3-oxo-(11Z)-eicosenoyl-CoA + CO2 + CoA. It carries out the reaction (11Z)-octadecenoyl-CoA + malonyl-CoA + H(+) = 3-oxo-(13Z)-eicosenoyl-CoA + CO2 + CoA. The catalysed reaction is (9Z,12Z)-octadecadienoyl-CoA + malonyl-CoA + H(+) = (11Z,14Z)-3-oxoicosa-11,14-dienoyl-CoA + CO2 + CoA. It catalyses the reaction (6Z,9Z,12Z,15Z)-octadecatetraenoyl-CoA + malonyl-CoA + H(+) = (8Z,11Z,14Z,17Z)-3-oxoicosatetraenoyl-CoA + CO2 + CoA. The enzyme catalyses (5Z,8Z,11Z,14Z)-eicosatetraenoyl-CoA + malonyl-CoA + H(+) = (7Z,10Z,13Z,16Z)-3-oxodocosatetraenoyl-CoA + CO2 + CoA. It carries out the reaction (5Z,8Z,11Z,14Z,17Z)-eicosapentaenoyl-CoA + malonyl-CoA + H(+) = 3-oxo-(7Z,10Z,13Z,16Z,19Z)-docosapentaenoyl-CoA + CO2 + CoA. The protein operates within lipid metabolism; polyunsaturated fatty acid biosynthesis. In terms of biological role, catalyzes the first and rate-limiting reaction of the four reactions that constitute the long-chain fatty acids elongation cycle. This endoplasmic reticulum-bound enzymatic process allows the addition of 2 carbons to the chain of long- and very long-chain fatty acids (VLCFAs) per cycle. Condensing enzyme that acts specifically toward polyunsaturated acyl-CoA with the higher activity toward C18:3(n-6) acyl-CoA. May participate in the production of monounsaturated and of polyunsaturated VLCFAs of different chain lengths that are involved in multiple biological processes as precursors of membrane lipids and lipid mediators. In conditions where the essential linoleic and alpha linoleic fatty acids are lacking it is also involved in the synthesis of Mead acid from oleic acid. The polypeptide is Very long chain fatty acid elongase 5 (Pongo abelii (Sumatran orangutan)).